The primary structure comprises 428 residues: Dihydroorotase (428 aa).

The Zn(2+) site is built by His59 and His61. Residues 61–63 and Asn93 each bind substrate; that span reads HLR. Zn(2+)-binding residues include Asp151, His178, and His231. Residue Asn277 coordinates substrate. Asp304 is a Zn(2+) binding site. The active site involves Asp304. Residues His308 and 322 to 323 each bind substrate; that span reads FG.

Belongs to the metallo-dependent hydrolases superfamily. DHOase family. Class I DHOase subfamily. Zn(2+) serves as cofactor.

It carries out the reaction (S)-dihydroorotate + H2O = N-carbamoyl-L-aspartate + H(+). The protein operates within pyrimidine metabolism; UMP biosynthesis via de novo pathway; (S)-dihydroorotate from bicarbonate: step 3/3. Functionally, catalyzes the reversible cyclization of carbamoyl aspartate to dihydroorotate. This is Dihydroorotase from Bacillus cereus (strain G9842).